Reading from the N-terminus, the 384-residue chain is 4-hydroxy-3-methylbut-2-en-1-yl diphosphate synthase (flavodoxin) (384 aa).

Positions 280, 283, 315, and 322 each coordinate [4Fe-4S] cluster.

Belongs to the IspG family. Requires [4Fe-4S] cluster as cofactor.

The enzyme catalyses (2E)-4-hydroxy-3-methylbut-2-enyl diphosphate + oxidized [flavodoxin] + H2O + 2 H(+) = 2-C-methyl-D-erythritol 2,4-cyclic diphosphate + reduced [flavodoxin]. It functions in the pathway isoprenoid biosynthesis; isopentenyl diphosphate biosynthesis via DXP pathway; isopentenyl diphosphate from 1-deoxy-D-xylulose 5-phosphate: step 5/6. Its function is as follows. Converts 2C-methyl-D-erythritol 2,4-cyclodiphosphate (ME-2,4cPP) into 1-hydroxy-2-methyl-2-(E)-butenyl 4-diphosphate. The polypeptide is 4-hydroxy-3-methylbut-2-en-1-yl diphosphate synthase (flavodoxin) (Frankia casuarinae (strain DSM 45818 / CECT 9043 / HFP020203 / CcI3)).